A 128-amino-acid chain; its full sequence is Large ribosomal subunit protein bL12 (128 aa).

This sequence belongs to the bacterial ribosomal protein bL12 family. As to quaternary structure, homodimer. Part of the ribosomal stalk of the 50S ribosomal subunit. Forms a multimeric L10(L12)X complex, where L10 forms an elongated spine to which 2 to 4 L12 dimers bind in a sequential fashion. Binds GTP-bound translation factors.

Its function is as follows. Forms part of the ribosomal stalk which helps the ribosome interact with GTP-bound translation factors. Is thus essential for accurate translation. The chain is Large ribosomal subunit protein bL12 from Synechococcus sp. (strain ATCC 27144 / PCC 6301 / SAUG 1402/1) (Anacystis nidulans).